The sequence spans 417 residues: Mast cell carboxypeptidase A (417 aa).

An N-terminal signal peptide occupies residues 1 to 15 (MRFFLLMAVIYTTLA). The propeptide at 16–109 (IAPVHFDREK…IEKQFDVKDE (94 aa)) is activation peptide. One can recognise a Peptidase M14 domain in the interval 118–412 (KYNDWDKIVS…LSVKFIAKYI (295 aa)). 2 disulfides stabilise this stretch: C173–C186 and C245–C268. Residues H176 and E179 each coordinate Zn(2+). H304 is a binding site for Zn(2+). Residue E378 is the Proton donor/acceptor of the active site.

Belongs to the peptidase M14 family. Requires Zn(2+) as cofactor.

It is found in the cytoplasmic vesicle. Its subcellular location is the secretory vesicle. The catalysed reaction is Release of a C-terminal amino acid, but little or no action with -Asp, -Glu, -Arg, -Lys or -Pro.. The chain is Mast cell carboxypeptidase A (Cpa3) from Mus musculus (Mouse).